Reading from the N-terminus, the 918-residue chain is Hexokinase-1 (918 aa).

Met-1 is modified (N-acetylmethionine). A mitochondrial-binding peptide (MBP) region spans residues 1 to 10 (MIAAQLLAYY). Hexokinase domains follow at residues 16-458 (DDQV…MVTA) and 464-906 (AEQH…LITA). Residues Arg-30 and 84–89 (DLGGSS) contribute to the ATP site. A hexokinase small subdomain 1 region spans residues 73–207 (DGSEKGDFIA…DYDANIVAVV (135 aa)). Residue 84 to 91 (DLGGSSFR) participates in D-glucose 6-phosphate binding. D-glucose-binding positions include Ser-155, 172–173 (TK), and 208–209 (ND). Residues 208–447 (NDTVGTMIDC…SDVRFLLSES (240 aa)) are hexokinase large subdomain 1. Asp-209 and Thr-232 together coordinate D-glucose 6-phosphate. Residues Asn-235, Glu-260, and 291–294 (QRFE) each bind D-glucose. Phosphoserine is present on Ser-337. 413-415 (DGS) lines the D-glucose 6-phosphate pocket. Residues 425 to 426 (RR) and 532 to 537 (DLGGTN) each bind ATP. The segment at 521 to 655 (DGTEDGDFLA…EFDLDVVAVV (135 aa)) is hexokinase small subdomain 2. Position 532–536 (532–536 (DLGGT)) interacts with D-glucose 6-phosphate. D-glucose is bound by residues 603-604 (SF), 620-621 (TK), and 656-657 (ND). Residues 656–895 (NDTVGTMMTC…CNVSFLLSED (240 aa)) form a hexokinase large subdomain 2 region. 2 residues coordinate D-glucose 6-phosphate: Asp-657 and Thr-680. Thr-680 is a binding site for ATP. D-glucose-binding positions include 682–683 (SN), Glu-708, and Glu-742. ATP-binding positions include 747–748 (GI), 784–788 (TKFLS), and 863–867 (TLYKL). Residues 861-863 (DGT) and Ser-897 contribute to the D-glucose 6-phosphate site.

This sequence belongs to the hexokinase family. As to quaternary structure, monomer. Interacts with RABL2/RABL2A; binds preferentially to GTP-bound RABL2. Interacts with VDAC1. The HK1-VDAC1 complex interacts with ATF2. Interacts (via N-terminal spermatogenic cell-specific region) with PFKM (via C-terminus). Interacts with SMAD5.

It is found in the mitochondrion outer membrane. The protein resides in the cytoplasm. It localises to the cytosol. The enzyme catalyses a D-hexose + ATP = a D-hexose 6-phosphate + ADP + H(+). The catalysed reaction is D-fructose + ATP = D-fructose 6-phosphate + ADP + H(+). It carries out the reaction D-glucose + ATP = D-glucose 6-phosphate + ADP + H(+). It catalyses the reaction D-mannose + ATP = D-mannose 6-phosphate + ADP + H(+). The enzyme catalyses D-glucosamine + ATP = D-glucosamine 6-phosphate + ADP + H(+). The protein operates within carbohydrate metabolism; hexose metabolism. It participates in carbohydrate degradation; glycolysis; D-glyceraldehyde 3-phosphate and glycerone phosphate from D-glucose: step 1/4. With respect to regulation, hexokinase is an allosteric enzyme inhibited by its product D-glucose 6-phosphate. Hexokinase activity is inhibited by N-acetyl-D-glucosamine. Its function is as follows. Catalyzes the phosphorylation of various hexoses, such as D-glucose, D-glucosamine, D-fructose, D-mannose and 2-deoxy-D-glucose, to hexose 6-phosphate (D-glucose 6-phosphate, D-glucosamine 6-phosphate, D-fructose 6-phosphate, D-mannose 6-phosphate and 2-deoxy-D-glucose 6-phosphate, respectively). Does not phosphorylate N-acetyl-D-glucosamine. Mediates the initial step of glycolysis by catalyzing phosphorylation of D-glucose to D-glucose 6-phosphate. Involved in innate immunity and inflammation by acting as a pattern recognition receptor for bacterial peptidoglycan. When released in the cytosol, N-acetyl-D-glucosamine component of bacterial peptidoglycan inhibits the hexokinase activity of HK1 and causes its dissociation from mitochondrial outer membrane, thereby activating the NLRP3 inflammasome. In Bos taurus (Bovine), this protein is Hexokinase-1.